The following is a 486-amino-acid chain: RAC-beta serine/threonine-protein kinase A (486 aa).

Residues 5 to 110 (MVIKEGWLQK…WIIAIQTVAN (106 aa)) enclose the PH domain. O-linked (GlcNAc) serine glycosylation is found at serine 133 and serine 136. The region spanning 157–414 (FDYLKLLGKG…AQEVMSHRFF (258 aa)) is the Protein kinase domain. ATP-binding positions include 163 to 171 (LGKGTFGKV) and lysine 186. Catalysis depends on aspartate 280, which acts as the Proton acceptor. Threonine 311 carries an O-linked (GlcNAc) threonine glycan. Threonine 314 carries the post-translational modification Phosphothreonine. Threonine 318 carries O-linked (GlcNAc) threonine glycosylation. Residues 415–486 (VSINWQDVTE…QFSYSASIRE (72 aa)) enclose the AGC-kinase C-terminal domain. The interval 455-486 (LTPPDRYDNLDALESDQRPHFPQFSYSASIRE) is disordered. The span at 459 to 473 (DRYDNLDALESDQRP) shows a compositional bias: basic and acidic residues. Serine 479 bears the Phosphoserine mark. O-linked (GlcNAc) serine; alternate glycosylation occurs at serine 479.

It belongs to the protein kinase superfamily. AGC Ser/Thr protein kinase family. RAC subfamily. Phosphorylation on Thr-314 and Ser-479 is required for full activity. Phosphorylation of the activation loop at Thr-314 by PDPK1/PDK1 is a prerequisite for full activation. Phosphorylation by mTORC2 at Ser-479 in response to growth factors plays a key role in AKT1 activation by facilitating subsequent phosphorylation of the activation loop by PDPK1/PDK1.

The catalysed reaction is L-seryl-[protein] + ATP = O-phospho-L-seryl-[protein] + ADP + H(+). It carries out the reaction L-threonyl-[protein] + ATP = O-phospho-L-threonyl-[protein] + ADP + H(+). Its activity is regulated as follows. Two specific sites, one in the kinase domain (Thr-314) and the other in the C-terminal regulatory region (Ser-479), need to be phosphorylated for its full activation. Functionally, akt2-a is one of several closely related serine/threonine-protein kinases known as the AKT kinase, and which regulate many processes including metabolism, proliferation, cell survival, growth and angiogenesis. This is mediated through serine and/or threonine phosphorylation of a range of downstream substrates. Over 100 substrate candidates have been reported so far, but for most of them, no isoform specificity has been reported. May be involved in the inhibition of ciliogenesis. This is RAC-beta serine/threonine-protein kinase A (akt2-a) from Xenopus laevis (African clawed frog).